The following is a 168-amino-acid chain: Mitochondrial ATP-independent inner membrane protease subunit 1a (168 aa).

The transit peptide at 1–47 (MRMTFLSYLKQWRGTAKEAFENVSIVAKFLCLLHVTDRYIISTTHVH) directs the protein to the mitochondrion. Residues Ser-50 and Lys-94 contribute to the active site.

It belongs to the peptidase S26 family. IMP1 subfamily. As to quaternary structure, heterodimer of 2 subunits, IMP1A/B and IMP12.

Its subcellular location is the mitochondrion inner membrane. Functionally, catalyzes the removal of transit peptides required for the targeting of proteins from the mitochondrial matrix, across the inner membrane, into the inter-membrane space. This is Mitochondrial ATP-independent inner membrane protease subunit 1a from Arabidopsis thaliana (Mouse-ear cress).